We begin with the raw amino-acid sequence, 583 residues long: Propane 2-monooxygenase operon transcriptional activator MimR (583 aa).

The 194-residue stretch at 320–513 (LAGRSSSFRR…LRHVLTETLR (194 aa)) folds into the Sigma-54 factor interaction domain. Residues 348-355 (GEKGSGRT) and 395-404 (DADFAVIVAD) each bind ATP.

In terms of biological role, acts as a transcriptional activator of the mimABCD operon encoding the propane 2-monooxygenase complex. This is Propane 2-monooxygenase operon transcriptional activator MimR from Mycolicibacterium goodii (Mycobacterium goodii).